A 360-amino-acid chain; its full sequence is MLVWVADFLAQYFSIFSVFQYLTLRAILGVLTALLISLLVGPVMIRKLSYYQIGQAVRDDGPESHFSKAGTPTMGGALILVAIAVSTLLWADLTNRYVLITLGVTLLFGAIGWVDDWRKVVERNPKGLPARWKYFWQSVFGFGAAVLLFKTAHLPQETTLIVPFFKDITLALGVGFVLLTYFVIVGGSNAVNLTDGLDGLAIMPTVMVGGALAVFAYLSGHVKFAEYLHIPYLPGTGELVIFLGALVGAGLGFLWFNTYPAQVFMGDVGALALGAALGVVAVIVRQELVFFVMGGVFVMETVSVILQVASYKLTGRRIFRMAPLHHHFELKGWPEPRVIVRFWVITVVLVLVGLATLKIR.

Helical transmembrane passes span 2-22 (LVWV…FQYL), 26-46 (AILG…VMIR), 73-93 (TMGG…WADL), 97-117 (YVLI…VDDW), 134-154 (YFWQ…TAHL), 168-188 (ITLA…VGGS), 199-219 (GLAI…AYLS), 236-256 (TGEL…FLWF), 263-283 (VFMG…VAVI), 288-308 (LVFF…ILQV), and 339-359 (IVRF…TLKI).

Belongs to the glycosyltransferase 4 family. MraY subfamily. It depends on Mg(2+) as a cofactor.

The protein localises to the cell inner membrane. The catalysed reaction is UDP-N-acetyl-alpha-D-muramoyl-L-alanyl-gamma-D-glutamyl-meso-2,6-diaminopimeloyl-D-alanyl-D-alanine + di-trans,octa-cis-undecaprenyl phosphate = di-trans,octa-cis-undecaprenyl diphospho-N-acetyl-alpha-D-muramoyl-L-alanyl-D-glutamyl-meso-2,6-diaminopimeloyl-D-alanyl-D-alanine + UMP. It functions in the pathway cell wall biogenesis; peptidoglycan biosynthesis. Its function is as follows. Catalyzes the initial step of the lipid cycle reactions in the biosynthesis of the cell wall peptidoglycan: transfers peptidoglycan precursor phospho-MurNAc-pentapeptide from UDP-MurNAc-pentapeptide onto the lipid carrier undecaprenyl phosphate, yielding undecaprenyl-pyrophosphoryl-MurNAc-pentapeptide, known as lipid I. The protein is Phospho-N-acetylmuramoyl-pentapeptide-transferase of Hahella chejuensis (strain KCTC 2396).